The sequence spans 707 residues: uncharacterized protein (707 aa).

Disordered stretches follow at residues 15 to 122 and 667 to 707; these read ALAK…LESY and ESVQ…DIDE. Composition is skewed to basic and acidic residues over residues 18–32 and 40–52; these read KKND…DKGI and EGKD…DVEK. A Phosphoserine modification is found at Ser112. The stretch at 659–700 forms a coiled coil; it reads EEQRKLIRESVQQDQEHKEQMRQKKKQALKSDDIELDDLSEE. Residues 692–707 are compositionally biased toward acidic residues; it reads IELDDLSEEEAEDIDE.

The protein belongs to the NOC2 family.

The protein resides in the nucleus. The protein localises to the nucleolus. This is an uncharacterized protein from Schizosaccharomyces pombe (strain 972 / ATCC 24843) (Fission yeast).